We begin with the raw amino-acid sequence, 642 residues long: Kelch-like protein 17 (642 aa).

A disordered region spans residues 1 to 53 (MQPRSERPAGRTQSPEHGSPGPGPEAPPPPPPQPPAPEAERTRPRQARPAAPM). Residues 21-37 (GPGPEAPPPPPPQPPAP) are compositionally biased toward pro residues. Positions 92 to 159 (CDIVLHVAAK…AYTAEIVVGE (68 aa)) constitute a BTB domain. The BACK domain maps to 194-296 (CLGIRGFADA…SRDFLLGHVD (103 aa)). The interval 289–641 (DFLLGHVDAE…SPTLSVSSTS (353 aa)) is interaction with F-actin. 6 Kelch repeats span residues 343–389 (VLFA…AVGN), 390–436 (RLYA…ALHG), 438–483 (LYSA…TLDG), 484–530 (NLYA…VLEG), 532–577 (LYVA…AMDG), and 578–624 (WLYA…VLEL). Residues 640–642 (TSL) form an interaction with PDZK1 region.

As to quaternary structure, interacts with F-actin; the interaction disrupts the F-actin structures and leads to marked changes of neuronal morphology. Component of a complex, composed of PDZK1, SYNGAP1, KLHL17 and NMDA receptors. Interacts directly with PDZK1 (via PDZ1 domain); the interaction is important for integrity of actin cytoskeleton structures in neurons. Interacts with DLG4 and SYNGAP1. Interacts (via kelch repeats) with GRIK2 (via C-terminus); the interaction targets GRIK2 for degradation via ubiquitin-proteasome pathway. Interacts with GRIK1. Interacts with (via BTB domain) CUL3; the interaction regulates surface GRIK2 expression.

It is found in the postsynaptic density. It localises to the synapse. It participates in protein modification; protein ubiquitination. Functionally, substrate-recognition component of some cullin-RING-based BCR (BTB-CUL3-RBX1) E3 ubiquitin-protein ligase complexes. The BCR(KLHL17) complex mediates the ubiquitination and subsequent degradation of GLUR6. May play a role in the actin-based neuronal function. In Homo sapiens (Human), this protein is Kelch-like protein 17 (KLHL17).